A 489-amino-acid chain; its full sequence is Glutamyl-tRNA(Gln) amidotransferase subunit A (489 aa).

Active-site charge relay system residues include Lys-77 and Ser-152. Ser-176 (acyl-ester intermediate) is an active-site residue.

The protein belongs to the amidase family. GatA subfamily. As to quaternary structure, heterotrimer of A, B and C subunits.

It catalyses the reaction L-glutamyl-tRNA(Gln) + L-glutamine + ATP + H2O = L-glutaminyl-tRNA(Gln) + L-glutamate + ADP + phosphate + H(+). In terms of biological role, allows the formation of correctly charged Gln-tRNA(Gln) through the transamidation of misacylated Glu-tRNA(Gln) in organisms which lack glutaminyl-tRNA synthetase. The reaction takes place in the presence of glutamine and ATP through an activated gamma-phospho-Glu-tRNA(Gln). The chain is Glutamyl-tRNA(Gln) amidotransferase subunit A from Levilactobacillus brevis (strain ATCC 367 / BCRC 12310 / CIP 105137 / JCM 1170 / LMG 11437 / NCIMB 947 / NCTC 947) (Lactobacillus brevis).